The chain runs to 181 residues: Mitochondrial inner membrane protein Mpv17 (181 aa).

The next 4 helical transmembrane spans lie at 20–38 (VIVS…QYLT), 48–70 (TARF…FRVL), 91–113 (FMFS…GFSF), and 140–162 (LINF…AFFW).

This sequence belongs to the peroxisomal membrane protein PXMP2/4 family.

Its subcellular location is the mitochondrion inner membrane. Its function is as follows. Involved in mitochondria homeostasis. This chain is Mitochondrial inner membrane protein Mpv17, found in Caenorhabditis briggsae.